Reading from the N-terminus, the 103-residue chain is Large ribosomal subunit protein bL21 (103 aa).

This sequence belongs to the bacterial ribosomal protein bL21 family. In terms of assembly, part of the 50S ribosomal subunit. Contacts protein L20.

In terms of biological role, this protein binds to 23S rRNA in the presence of protein L20. The protein is Large ribosomal subunit protein bL21 of Albidiferax ferrireducens (strain ATCC BAA-621 / DSM 15236 / T118) (Rhodoferax ferrireducens).